Consider the following 757-residue polypeptide: LPS-assembly protein LptD (757 aa).

Residues Met-1 to Ala-20 form the signal peptide.

This sequence belongs to the LptD family. In terms of assembly, component of the lipopolysaccharide transport and assembly complex. Interacts with LptE and LptA.

It is found in the cell outer membrane. Functionally, together with LptE, is involved in the assembly of lipopolysaccharide (LPS) at the surface of the outer membrane. In Idiomarina loihiensis (strain ATCC BAA-735 / DSM 15497 / L2-TR), this protein is LPS-assembly protein LptD.